Here is a 319-residue protein sequence, read N- to C-terminus: MKPLNIIFAGTPDFAARHLQALLDSEHNVIAVYSQPDRPAGRGKKLSASPVKELALSHDIPVFQPASLRAVEAQAELATLNADIMVVVAYGLILPQIVLDTPRLGCINVHGSILPRWRGAAPIQRALWAGDTETGVTIMQMDLGLDTGDMLLKTSLPIEDADTSASLYEKLAVQGPQALLEALDGLNAGKLKGEPQDPALANYAEKLSKEEARLDWNKSAKQLWQEIRAFNPWPVSYFEYQDSTIKVWQASYNPQPNSALAGSIIKADKHSIEVATAEGSLQLEIIQLPNKKPLAVADILNSRADWFAQGLSLLPEASS.

A (6S)-5,6,7,8-tetrahydrofolate-binding site is contributed by 112–115 (SILP).

It belongs to the Fmt family.

The enzyme catalyses L-methionyl-tRNA(fMet) + (6R)-10-formyltetrahydrofolate = N-formyl-L-methionyl-tRNA(fMet) + (6S)-5,6,7,8-tetrahydrofolate + H(+). Its function is as follows. Attaches a formyl group to the free amino group of methionyl-tRNA(fMet). The formyl group appears to play a dual role in the initiator identity of N-formylmethionyl-tRNA by promoting its recognition by IF2 and preventing the misappropriation of this tRNA by the elongation apparatus. The chain is Methionyl-tRNA formyltransferase from Shewanella denitrificans (strain OS217 / ATCC BAA-1090 / DSM 15013).